The sequence spans 136 residues: Outer envelope pore protein 16-4, chloroplastic (136 aa).

Positions 1-59 are contains 4 beta strands; the sequence is MEEELLSAVPCSSLTVESVLRVATAGGLYGLCAGPRDARKIGLSGVSQASFVAKSIGRF. 4 consecutive transmembrane segments (helical) span residues 18-34, 56-72, 86-102, and 110-126; these read SVLR…LCAG, IGRF…VFTM, WVNA…AVAI, and VVGM…LANC.

This sequence belongs to the Tim17/Tim22/Tim23 family. Plastid outer envelope porin OEP16 (TC 1.B.30) subfamily. As to quaternary structure, homodimer and oligomers in membrane.

Its subcellular location is the plastid. The protein resides in the chloroplast outer membrane. Voltage-dependent high-conductance channel with a slight cation-selectivity; selective for amino acids but excludes triosephosphates or uncharged sugars. Non-essential amino acid-selective channel protein and translocation pore for NADPH:protochlorophyllide oxidoreductase A (PORA) and possibly PORB. This Arabidopsis thaliana (Mouse-ear cress) protein is Outer envelope pore protein 16-4, chloroplastic (OEP164).